A 281-amino-acid chain; its full sequence is ATP synthase gamma chain (281 aa).

It belongs to the ATPase gamma chain family. As to quaternary structure, F-type ATPases have 2 components, CF(1) - the catalytic core - and CF(0) - the membrane proton channel. CF(1) has five subunits: alpha(3), beta(3), gamma(1), delta(1), epsilon(1). CF(0) has three main subunits: a, b and c.

It is found in the cell membrane. Produces ATP from ADP in the presence of a proton gradient across the membrane. The gamma chain is believed to be important in regulating ATPase activity and the flow of protons through the CF(0) complex. In Clostridium pasteurianum, this protein is ATP synthase gamma chain.